The chain runs to 541 residues: DNA ligase 1 (541 aa).

Glu-234 contacts ATP. The N6-AMP-lysine intermediate role is filled by Lys-236. ATP is bound by residues Arg-241, Arg-256, Glu-286, Phe-325, Arg-398, and Lys-404.

It belongs to the ATP-dependent DNA ligase family. Mg(2+) serves as cofactor.

The catalysed reaction is ATP + (deoxyribonucleotide)n-3'-hydroxyl + 5'-phospho-(deoxyribonucleotide)m = (deoxyribonucleotide)n+m + AMP + diphosphate.. Functionally, DNA ligase that seals nicks in double-stranded DNA during DNA replication, DNA recombination and DNA repair. The chain is DNA ligase 1 from Korarchaeum cryptofilum (strain OPF8).